We begin with the raw amino-acid sequence, 1044 residues long: Isoleucine--tRNA ligase (1044 aa).

The 'HIGH' region motif lies at 48-58 (PFATGLPHFGH). The 'KMSKS' region signature appears at 594-598 (KMSKS). Lys597 serves as a coordination point for ATP.

It belongs to the class-I aminoacyl-tRNA synthetase family. IleS type 2 subfamily. Monomer. Zn(2+) is required as a cofactor.

It is found in the cytoplasm. The enzyme catalyses tRNA(Ile) + L-isoleucine + ATP = L-isoleucyl-tRNA(Ile) + AMP + diphosphate. In terms of biological role, catalyzes the attachment of isoleucine to tRNA(Ile). As IleRS can inadvertently accommodate and process structurally similar amino acids such as valine, to avoid such errors it has two additional distinct tRNA(Ile)-dependent editing activities. One activity is designated as 'pretransfer' editing and involves the hydrolysis of activated Val-AMP. The other activity is designated 'posttransfer' editing and involves deacylation of mischarged Val-tRNA(Ile). The sequence is that of Isoleucine--tRNA ligase from Borrelia turicatae (strain 91E135).